Reading from the N-terminus, the 400-residue chain is MTALKVGSESWWQSKHGPEWQRLNDEMFEVTFWWRDPQGSEEYSTIKRVWVYITGVTDHHQNSQPQSMQRIAGTNVWQWTTQLNANWRGSYCFIPTERDDIFSVPSPDRLELREGWRKLLPQAIADPLNLQSWKGGRGHAVSALEMPQAPLQPGWDCPQAPEIPAKEIIWKSERLKKSRRVWIFTTGDATAEERPLAVLLDGEFWAQSMPVWPVLTSLTHRQQLPPAVYVLIDAIDTTHRAHELPCNADFWLAVQQELLPLVKAIAPFSDRADRTVVAGQSFGGLSALYAGLHWPERFGCVLSQSGSYWWPHRGGQQEGVLLEKLKAGEVSAEGLRIVLEAGIREPMIMRANQALYAQLHPIKESIFWRQVDGGHDALCWRGGLMQGLIDLWQPLFHDRS.

It belongs to the Fes family. As to quaternary structure, monomer.

The protein localises to the cytoplasm. The catalysed reaction is Fe(III)-enterobactin + 3 H2O + H(+) = Fe(III)-[N-(2,3-dihydroxybenzoyl)-L-serine] + 2 N-(2,3-dihydroxybenzoyl)-L-serine. The enzyme catalyses Fe(III)-enterobactin + H2O = Fe(III)-[N-(2,3-dihydroxybenzoyl)-L-serine]3 + H(+). It catalyses the reaction Fe(III)-[N-(2,3-dihydroxybenzoyl)-L-serine]3 + H2O + H(+) = Fe(III)-[N-(2,3-dihydroxybenzoyl)-L-serine]2 + N-(2,3-dihydroxybenzoyl)-L-serine. It carries out the reaction Fe(III)-[N-(2,3-dihydroxybenzoyl)-L-serine]2 + H2O + H(+) = Fe(III)-[N-(2,3-dihydroxybenzoyl)-L-serine] + N-(2,3-dihydroxybenzoyl)-L-serine. The catalysed reaction is enterobactin + 3 H2O = 3 N-(2,3-dihydroxybenzoyl)-L-serine + 2 H(+). Its activity is regulated as follows. Inhibited by N-ethylmaleimide. Catalyzes the hydrolysis of ferric enterobactin (Fe-Ent). Is responsible for the release of iron from ferric enterobactin. Also catalyzes the hydrolysis of iron-free enterobactin (Ent). Cleavage of ferric enterobactin results in a mixture of three hydrolysis products, 2,3-dihydroxybenzoylserine (DHBS), the linear dimer (DHBS)2 and the linear trimer (DHBS)3, while cleavage of iron-free enterobactin yields only the monomer. Hydrolysis of ferric enterobactin is less efficient than hydrolysis of unliganded enterobactin. It also cleaves the aluminum (III) complex at a rate similar to the ferric complex. The protein is Iron(III) enterobactin esterase of Escherichia coli (strain K12).